Consider the following 213-residue polypeptide: Amelogenin, X isoform (213 aa).

Residues 1-16 (MGTWILFACLLGAAFS) form the signal peptide. Phosphoserine is present on serine 32. Low complexity-rich tracts occupy residues 96 to 105 (VPQQPMMPVP) and 114 to 160 (QHHQ…QPLQ). Residues 96 to 213 (VPQQPMMPVP…TDKTKREEVD (118 aa)) form a disordered region. A compositionally biased stretch (pro residues) spans 161-194 (PLQPQPPVHPIQPLPPQPPLPPIFPMQPLPPMLP).

The protein belongs to the amelogenin family. Interacts with KRT5. Phosphorylated by FAM20C in vitro.

It localises to the secreted. The protein resides in the extracellular space. Its subcellular location is the extracellular matrix. Its function is as follows. Plays a role in the biomineralization of teeth. Seems to regulate the formation of crystallites during the secretory stage of tooth enamel development. Thought to play a major role in the structural organization and mineralization of developing enamel. In Bos taurus (Bovine), this protein is Amelogenin, X isoform (AMELX).